A 417-amino-acid polypeptide reads, in one-letter code: Membrane protein UL43 (417 aa).

Residues 1–21 (MLRNDSHRAVSPEDGQGRVDD) are disordered. 5 consecutive transmembrane segments (helical) span residues 57–77 (GPYANAASGAFAVGCAVLGFM), 90–110 (IYAWLKLAAGGAALVLWSLGE), 119–139 (APGPATQCLALGAAYAALLVL), 146–166 (LFLLAPGPLFVGTLGMVVGGL), and 175–195 (WWIGGPAAAALAAAVLAGPGA). The segment at 217–254 (AGESLSRRPPEDPERPGVPGPPSPPTPQRSHGPPADEV) is disordered. The span at 221–231 (LSRRPPEDPER) shows a compositional bias: basic and acidic residues. Positions 232 to 243 (PGVPGPPSPPTP) are enriched in pro residues. 5 helical membrane passes run 263–283 (ENVWVPVVTFLGAGALAVKTV), 291–311 (PGPGLPLWPQVFLGGHVAVAL), 323–343 (LTDPLLFVHAGLQVINLGLVF), 348–368 (VVVYAALGGAVWISLAQVLGL), and 389–409 (GLFFSVYALGFGVGVLLCPPG).

This sequence belongs to the alphaherpesvirinae HHV-1 UL43 family.

The protein localises to the membrane. This chain is Membrane protein UL43, found in Human herpesvirus 1 (strain 17) (HHV-1).